A 383-amino-acid chain; its full sequence is Succinate--CoA ligase [ADP-forming] subunit beta 2 (383 aa).

In terms of domain architecture, ATP-grasp spans 9 to 231 (RELFKEHGIV…QEDADSLEAR (223 aa)). ATP is bound by residues Lys-45, 52 to 54 (GRG), Cys-94, and Glu-99. Residues Asn-187 and Asp-201 each coordinate Mg(2+). Substrate contacts are provided by residues Asn-251 and 308-310 (GIT).

This sequence belongs to the succinate/malate CoA ligase beta subunit family. In terms of assembly, heterotetramer of two alpha and two beta subunits. Mg(2+) serves as cofactor.

It catalyses the reaction succinate + ATP + CoA = succinyl-CoA + ADP + phosphate. It carries out the reaction GTP + succinate + CoA = succinyl-CoA + GDP + phosphate. It functions in the pathway carbohydrate metabolism; tricarboxylic acid cycle; succinate from succinyl-CoA (ligase route): step 1/1. In terms of biological role, succinyl-CoA synthetase functions in the citric acid cycle (TCA), coupling the hydrolysis of succinyl-CoA to the synthesis of either ATP or GTP and thus represents the only step of substrate-level phosphorylation in the TCA. The beta subunit provides nucleotide specificity of the enzyme and binds the substrate succinate, while the binding sites for coenzyme A and phosphate are found in the alpha subunit. The polypeptide is Succinate--CoA ligase [ADP-forming] subunit beta 2 (Streptomyces coelicolor (strain ATCC BAA-471 / A3(2) / M145)).